Reading from the N-terminus, the 60-residue chain is Large ribosomal subunit protein uL30 (60 aa).

Belongs to the universal ribosomal protein uL30 family. As to quaternary structure, part of the 50S ribosomal subunit.

The sequence is that of Large ribosomal subunit protein uL30 from Clavibacter michiganensis subsp. michiganensis (strain NCPPB 382).